The following is a 393-amino-acid chain: Formate-dependent phosphoribosylglycinamide formyltransferase (393 aa).

N(1)-(5-phospho-beta-D-ribosyl)glycinamide is bound by residues Glu22–Leu23 and Glu82. Residues Arg114, Lys155, Ser160–Gln165, Glu195–Ile198, and Glu203 contribute to the ATP site. Residues Arg119 to Leu308 enclose the ATP-grasp domain. 2 residues coordinate Mg(2+): Glu267 and Glu279. Residues Asp286, Lys356, and Arg363–Arg364 each bind N(1)-(5-phospho-beta-D-ribosyl)glycinamide.

The protein belongs to the PurK/PurT family. Homodimer.

It carries out the reaction N(1)-(5-phospho-beta-D-ribosyl)glycinamide + formate + ATP = N(2)-formyl-N(1)-(5-phospho-beta-D-ribosyl)glycinamide + ADP + phosphate + H(+). The protein operates within purine metabolism; IMP biosynthesis via de novo pathway; N(2)-formyl-N(1)-(5-phospho-D-ribosyl)glycinamide from N(1)-(5-phospho-D-ribosyl)glycinamide (formate route): step 1/1. Involved in the de novo purine biosynthesis. Catalyzes the transfer of formate to 5-phospho-ribosyl-glycinamide (GAR), producing 5-phospho-ribosyl-N-formylglycinamide (FGAR). Formate is provided by PurU via hydrolysis of 10-formyl-tetrahydrofolate. The polypeptide is Formate-dependent phosphoribosylglycinamide formyltransferase (Pseudomonas aeruginosa (strain LESB58)).